We begin with the raw amino-acid sequence, 111 residues long: DNA-binding protein MTH_1615 (111 aa).

The protein belongs to the PDCD5 family.

Its function is as follows. DNA-binding protein which can interact with a randomly chosen 20-mer of double-stranded DNA. This chain is DNA-binding protein MTH_1615, found in Methanothermobacter thermautotrophicus (strain ATCC 29096 / DSM 1053 / JCM 10044 / NBRC 100330 / Delta H) (Methanobacterium thermoautotrophicum).